The following is a 38-amino-acid chain: Large ribosomal subunit protein bL36c (38 aa).

This sequence belongs to the bacterial ribosomal protein bL36 family.

The protein resides in the plastid. The protein localises to the chloroplast. This Mesostigma viride (Green alga) protein is Large ribosomal subunit protein bL36c (rpl36).